We begin with the raw amino-acid sequence, 122 residues long: Large ribosomal subunit protein uL18 (122 aa).

Residues 1 to 27 (MATLSKKQQTQKRHKRLRRHLNGTNHR) form a disordered region. Over residues 9–27 (QTQKRHKRLRRHLNGTNHR) the composition is skewed to basic residues.

It belongs to the universal ribosomal protein uL18 family. Part of the 50S ribosomal subunit; part of the 5S rRNA/L5/L18/L25 subcomplex. Contacts the 5S and 23S rRNAs.

Its function is as follows. This is one of the proteins that bind and probably mediate the attachment of the 5S RNA into the large ribosomal subunit, where it forms part of the central protuberance. In Prochlorococcus marinus (strain MIT 9211), this protein is Large ribosomal subunit protein uL18.